Reading from the N-terminus, the 156-residue chain is Arginine repressor (156 aa).

This sequence belongs to the ArgR family.

The protein resides in the cytoplasm. The protein operates within amino-acid biosynthesis; L-arginine biosynthesis [regulation]. Its function is as follows. Regulates arginine biosynthesis genes. In Shewanella woodyi (strain ATCC 51908 / MS32), this protein is Arginine repressor.